A 216-amino-acid polypeptide reads, in one-letter code: Adenylate kinase (216 aa).

11–16 (GSGKGT) is a binding site for ATP. The interval 31 to 60 (ATGDLFRKAIECGDELGDTVKSYMERGELV) is NMP. AMP contacts are provided by residues Thr32, Arg37, 58–60 (ELV), 86–89 (GFPR), and Gln93. An LID region spans residues 127–163 (GRWVCRSCQSPYQSGCAEVTKGKCSRCQGGLYQRPDD). Residue Arg128 participates in ATP binding. Zn(2+)-binding residues include Cys131, Cys134, Cys150, and Cys153. The AMP site is built by Arg160 and Arg171. Ala199 contacts ATP.

Belongs to the adenylate kinase family. In terms of assembly, monomer.

It localises to the cytoplasm. The catalysed reaction is AMP + ATP = 2 ADP. It functions in the pathway purine metabolism; AMP biosynthesis via salvage pathway; AMP from ADP: step 1/1. Catalyzes the reversible transfer of the terminal phosphate group between ATP and AMP. Plays an important role in cellular energy homeostasis and in adenine nucleotide metabolism. The sequence is that of Adenylate kinase from Dehalococcoides mccartyi (strain CBDB1).